The sequence spans 536 residues: L-ornithine N(5)-monooxygenase SIDA (536 aa).

Positions 1–25 (MSPHRETTGDESTTTTVPQNGTNGA) are disordered. FAD is bound by residues 115–123 (EKQTRFAWH) and Gln134. Residue Lys139 coordinates L-ornithine. Residue Val200 coordinates FAD. Residue Arg310 coordinates NADP(+). Residues 324–327 (NSIF) and Asn354 each bind L-ornithine. FAD is bound at residue 515 to 517 (TLL). Position 518 (Ser518) interacts with L-ornithine.

Belongs to the lysine N(6)-hydroxylase/L-ornithine N(5)-oxygenase family. In terms of assembly, homotetramer. The cofactor is FAD.

It catalyses the reaction L-ornithine + NADH + O2 = N(5)-hydroxy-L-ornithine + NAD(+) + H2O. It carries out the reaction L-ornithine + NADPH + O2 = N(5)-hydroxy-L-ornithine + NADP(+) + H2O. The protein operates within siderophore biosynthesis. Its function is as follows. L-ornithine N(5)-monooxygenase; part of the gene cluster that mediates the biosynthesis of at least 11 siderophores, including beauverichelin A, dimerumic acid (DA), Na-dimethyl coprogen (NADC), eleutherazine B, ferricrocin (FC), fusarinine A, fusarinine C (FsC), metachelin A, mevalonolactone, rhodotorulic acid (RA) and tenellin. This cocktail of siderophores for iron metabolism is essential for virulence, and more specifically for the fungal virulence in penetrating through the host cuticle. Siderophore synthesis is also involved in conidial germination under iron-deficient conditions. SIDA initiates the biosynthesis of these siderophores with the enzymatic hydroxylation of ornithine. SIDA is indispensable for the production of most siderophores including fusarinine C and ferricrocin but not mevalonolactone and eleutherazine B. However, SIDA mediates the metabolic interplay between synthesis of mevalonolactone and eleutherazine B and other siderophores. The protein is L-ornithine N(5)-monooxygenase SIDA of Beauveria bassiana (strain ARSEF 2860) (White muscardine disease fungus).